Here is a 217-residue protein sequence, read N- to C-terminus: Peroxiredoxin (217 aa).

Residues 2-159 (PVIGEKFPEV…IVRLVKALQV (158 aa)) enclose the Thioredoxin domain. The active-site Cysteine sulfenic acid (-SOH) intermediate is the Cys-46. A substrate-binding site is contributed by Arg-122. A disulfide bridge connects residues Cys-206 and Cys-212.

It belongs to the peroxiredoxin family. Prx6 subfamily. Homodecamer. Pentamer of dimers that assemble into a ring structure.

Its subcellular location is the cytoplasm. It catalyses the reaction a hydroperoxide + [thioredoxin]-dithiol = an alcohol + [thioredoxin]-disulfide + H2O. In terms of biological role, thiol-specific peroxidase that catalyzes the reduction of hydrogen peroxide and organic hydroperoxides to water and alcohols, respectively. Plays a role in cell protection against oxidative stress by detoxifying peroxides. In Methanocaldococcus jannaschii (strain ATCC 43067 / DSM 2661 / JAL-1 / JCM 10045 / NBRC 100440) (Methanococcus jannaschii), this protein is Peroxiredoxin.